A 579-amino-acid chain; its full sequence is Nuclear hormone receptor family member nhr-47 (579 aa).

Positions glycine 8–asparagine 83 form a DNA-binding region, nuclear receptor. 2 NR C4-type zinc fingers span residues cysteine 11–cysteine 31 and cysteine 47–cysteine 71. The tract at residues arginine 87 to glutamate 128 is disordered. Residues glycine 104–aspartate 114 show a composition bias toward basic and acidic residues. The NR LBD domain maps to alanine 164–proline 553.

Belongs to the nuclear hormone receptor family.

Its subcellular location is the nucleus. Functionally, orphan nuclear receptor. The polypeptide is Nuclear hormone receptor family member nhr-47 (nhr-47) (Caenorhabditis elegans).